A 198-amino-acid polypeptide reads, in one-letter code: Protein ORFi in retron Ec67 (198 aa).

Belongs to the CI repressor protein family.

In Escherichia coli, this protein is Protein ORFi in retron Ec67.